Reading from the N-terminus, the 373-residue chain is Partitioning protein REP1 (373 aa).

The tract at residues M1–A76 is interaction with REP2. An interaction with REP2 and self-association region spans residues M1–R129. The nuclear localization stretch occupies residues F349–G373.

As to quaternary structure, interacts with REP2.

It is found in the nucleus. Functionally, part of the plasmid partitioning system, which ensures the equal distribution of replicated plasmid molecules to daughter cells. The plasmids exist as well-organized plasmid foci within the nucleus that stay together throughout the cell-cycle and act as entity during segregation, effetively reducing copy number to one. Plasmid partitioning requires the proteins REP1, REP2, and a cis-acting locus STB (REP3). REP1-REP2 stably associate with CSE4-containing chromatin at STB during S-phase, marking the locus with a centromeric tag, and thereby probably catching mitotic spindle microtubules to the plasmid cluster and coupling plasmid segregation to chromosome segregation. REP1-REP2 are required to recruit the cohesin complex to the STB locus for pairing of the replicated plasmid cluster, a prerequisite for successful plasmid segregation. REP1-REP2 also negatively regulate expression of site-specific recombinase FLP and of RAF1. This chain is Partitioning protein REP1 (REP1), found in Saccharomyces cerevisiae (strain ATCC 204508 / S288c) (Baker's yeast).